The sequence spans 613 residues: MITPEKRTLDEPEVGSESKKPNNSTHVKGVAAIKAEYLVPTSSLTVVEYDDDEAEGGDREGESKPRNKKKQKGQNHKRDLKQKKDIIKLCPSLIDPEDDRICQVGADKCRFHHDIASYLESKPQDIDGICPVFEALGYCPTGIKCRWLKSHYNPETSKLIKDGDKMETAKTTNYEVNHIDKDQKMEMQKKKYFFKISQPVIKYLDSRIQNEANLAKQKEERKDNEASYVEAPFTIAEKKKLYLRNAKIVSPLTTVGNLPYRRLMKTLGADVTYSEMALSVPLIQGHNPEWALPKAHVSEYPGFGVQIASSKHWAAAKAAEAIYRNTTHVSELNLNCGCPIDLLYKQGQGSALLDQPSKLLRILSGMNASSGDIPVTVKIRTGIKEGKNTAVNLVSRVLEEGNAAAITLHGRSRQQRYSKEADWNYIAEVGTVVKNWNEQQKEDKEGRDRDPVYFVGNGDVYSHEDWYEHVNTDGIDSVMVARGALIKPWIFEEVEAQQYLDKSSSERLDILGKFAKYAIEHWGSDEYGVGLSRRFMCEFLSFTHRYIPVGIMERLPPKLNERPPKWVGRNDLETLLASTDYKDWIKITEMFLGKATDDFQFTPKHKSNAYENK.

Composition is skewed to basic and acidic residues over residues 1 to 20 (MITP…ESKK) and 56 to 65 (GGDREGESKP). Disordered regions lie at residues 1 to 29 (MITP…HVKG) and 48 to 80 (EYDD…KRDL). The segment covering 66–80 (RNKKKQKGQNHKRDL) has biased composition (basic residues). 2 C3H1-type zinc fingers span residues 90 to 113 (CPSL…RFHH) and 130 to 151 (CPVF…LKSH). FMN is bound by residues 251 to 253 (PLT) and Gln-306. Cys-338 serves as the catalytic Proton donor. FMN is bound by residues Lys-378, His-409, 457–459 (NGD), and 481–482 (AR).

The protein belongs to the Dus family. Dus3 subfamily. It depends on FMN as a cofactor.

It localises to the cytoplasm. Its subcellular location is the nucleus. The enzyme catalyses 5,6-dihydrouridine(47) in tRNA + NAD(+) = uridine(47) in tRNA + NADH + H(+). It catalyses the reaction 5,6-dihydrouridine(47) in tRNA + NADP(+) = uridine(47) in tRNA + NADPH + H(+). It carries out the reaction a 5,6-dihydrouridine in mRNA + NAD(+) = a uridine in mRNA + NADH + H(+). The catalysed reaction is a 5,6-dihydrouridine in mRNA + NADP(+) = a uridine in mRNA + NADPH + H(+). Functionally, catalyzes the synthesis of dihydrouridine, a modified base found in the D-loop of most tRNAs. Specifically modifies U47 in cytoplasmic tRNAs. Catalyzes the synthesis of dihydrouridine in some mRNAs, thereby affecting their translation. The chain is tRNA-dihydrouridine(47) synthase [NAD(P)(+)] (DUS3) from Candida albicans (strain SC5314 / ATCC MYA-2876) (Yeast).